Reading from the N-terminus, the 386-residue chain is Magnesium transporter MRS2-7 (386 aa).

A run of 2 helical transmembrane segments spans residues 321–341 (LMLS…GIFG) and 355–375 (IFKW…VIIL). A Required for magnesium transport activity motif is present at residues 341–343 (GMN).

It belongs to the CorA metal ion transporter (MIT) (TC 1.A.35.5) family. As to expression, isoform 1 is expressed in the whole plant. Isoform 4 is expressed only in roots and flowers.

The protein resides in the endoplasmic reticulum membrane. Low-affinity magnesium transporter that mediates the influx of magnesium. The polypeptide is Magnesium transporter MRS2-7 (MRS2-7) (Arabidopsis thaliana (Mouse-ear cress)).